A 254-amino-acid chain; its full sequence is Wall-associated protein (254 aa).

The tract at residues 25 to 46 (DRVEPKEEPPKVPQAPKRDLKP) is disordered.

The protein localises to the secreted. It localises to the cell wall. This is Wall-associated protein (wapA') from Geobacillus stearothermophilus (Bacillus stearothermophilus).